The following is a 154-amino-acid chain: Secreted RxLR effector protein PITG_21681 (154 aa).

The N-terminal stretch at 1–20 is a signal peptide; sequence MRRYAALMVIDAVLLSTSQA. The interval 42–70 is disordered; sequence SAERDGGIPNKRSLRRISVTESNDGERDE. Positions 53 to 72 match the RxLR-dEER motif; the sequence is RSLRRISVTESNDGERDEER.

This sequence belongs to the RxLR effector family.

It localises to the secreted. The protein resides in the host cell. In terms of biological role, secreted effector that is involved in host plant infection. Increases the susceptibility to P.infestans and reduces the plant growth. Affects the expression of host genes. The polypeptide is Secreted RxLR effector protein PITG_21681 (Phytophthora infestans (strain T30-4) (Potato late blight agent)).